The sequence spans 192 residues: Protein GrpE (192 aa).

The interval 1-43 (MSKEEFPHEKDLKDEVTPDKAPKKDPKAASKEEVKEDPAKDYE) is disordered.

This sequence belongs to the GrpE family. As to quaternary structure, homodimer.

It localises to the cytoplasm. In terms of biological role, participates actively in the response to hyperosmotic and heat shock by preventing the aggregation of stress-denatured proteins, in association with DnaK and GrpE. It is the nucleotide exchange factor for DnaK and may function as a thermosensor. Unfolded proteins bind initially to DnaJ; upon interaction with the DnaJ-bound protein, DnaK hydrolyzes its bound ATP, resulting in the formation of a stable complex. GrpE releases ADP from DnaK; ATP binding to DnaK triggers the release of the substrate protein, thus completing the reaction cycle. Several rounds of ATP-dependent interactions between DnaJ, DnaK and GrpE are required for fully efficient folding. The polypeptide is Protein GrpE (Lactobacillus gasseri (strain ATCC 33323 / DSM 20243 / BCRC 14619 / CIP 102991 / JCM 1131 / KCTC 3163 / NCIMB 11718 / NCTC 13722 / AM63)).